The chain runs to 282 residues: MSSYANHQALAGLTLGKSTDYRDTYDASLLQGVPRSLNRDPLGLKADNLPFHGTDIWTLYELSWLNAKGLPQVAVGHVELDYTSVNLIESKSFKLYLNSFNQTRFNNWDEVRQTLERDLSTCAQGKISVALYRLDELEGQPIGHFNGTCIDDQDITIDNYEFTTDYLENATCGEKVVEETLVSHLLKSNCLITHQPDWGSLQIQYRGRQIDREKLLRYLVSFRHHNEFHEQCVERIFNDLLRFCQPEKLSVYARYTRRGGLDINPWRSNSDFVPSTTRLVRQ.

Position 88-90 (88-90) interacts with substrate; it reads IES. 90 to 91 is a binding site for NADPH; the sequence is SK. Cys-190 acts as the Thioimide intermediate in catalysis. Catalysis depends on Asp-197, which acts as the Proton donor. Substrate is bound at residue 229 to 230; the sequence is HE. 258-259 provides a ligand contact to NADPH; that stretch reads RG.

This sequence belongs to the GTP cyclohydrolase I family. QueF type 2 subfamily. In terms of assembly, homodimer.

It localises to the cytoplasm. The catalysed reaction is 7-aminomethyl-7-carbaguanine + 2 NADP(+) = 7-cyano-7-deazaguanine + 2 NADPH + 3 H(+). Its pathway is tRNA modification; tRNA-queuosine biosynthesis. In terms of biological role, catalyzes the NADPH-dependent reduction of 7-cyano-7-deazaguanine (preQ0) to 7-aminomethyl-7-deazaguanine (preQ1). The protein is NADPH-dependent 7-cyano-7-deazaguanine reductase of Escherichia coli (strain K12 / MC4100 / BW2952).